We begin with the raw amino-acid sequence, 424 residues long: Tyrosine--tRNA ligase (424 aa).

Position 37 (Tyr-37) interacts with L-tyrosine. A 'HIGH' region motif is present at residues 42–51 (PTADSLHLGH). 2 residues coordinate L-tyrosine: Tyr-175 and Gln-179. The 'KMSKS' region motif lies at 235–239 (KFGKT). Lys-238 provides a ligand contact to ATP. One can recognise an S4 RNA-binding domain in the interval 357–414 (ADLMQALVDAELQPSRGQARKTIASNAVTINGEKQSDPEYIFNDEDRLFGRYTLLRRG).

The protein belongs to the class-I aminoacyl-tRNA synthetase family. TyrS type 1 subfamily. As to quaternary structure, homodimer.

Its subcellular location is the cytoplasm. The catalysed reaction is tRNA(Tyr) + L-tyrosine + ATP = L-tyrosyl-tRNA(Tyr) + AMP + diphosphate + H(+). In terms of biological role, catalyzes the attachment of tyrosine to tRNA(Tyr) in a two-step reaction: tyrosine is first activated by ATP to form Tyr-AMP and then transferred to the acceptor end of tRNA(Tyr). This Salmonella agona (strain SL483) protein is Tyrosine--tRNA ligase.